The sequence spans 180 residues: dCTP deaminase (180 aa).

DCTP contacts are provided by residues 101–106 (KSSFAR) and Asp117. Glu127 acts as the Proton donor/acceptor in catalysis. 2 residues coordinate dCTP: Tyr159 and Gln168.

It belongs to the dCTP deaminase family. Homotrimer.

The catalysed reaction is dCTP + H2O + H(+) = dUTP + NH4(+). It participates in pyrimidine metabolism; dUMP biosynthesis; dUMP from dCTP (dUTP route): step 1/2. Catalyzes the deamination of dCTP to dUTP. The sequence is that of dCTP deaminase from Ignicoccus hospitalis (strain KIN4/I / DSM 18386 / JCM 14125).